The sequence spans 376 residues: Anhydro-N-acetylmuramic acid kinase (376 aa).

An ATP-binding site is contributed by 11-18 (GTSMDGVD).

This sequence belongs to the anhydro-N-acetylmuramic acid kinase family.

The enzyme catalyses 1,6-anhydro-N-acetyl-beta-muramate + ATP + H2O = N-acetyl-D-muramate 6-phosphate + ADP + H(+). It functions in the pathway amino-sugar metabolism; 1,6-anhydro-N-acetylmuramate degradation. Its pathway is cell wall biogenesis; peptidoglycan recycling. In terms of biological role, catalyzes the specific phosphorylation of 1,6-anhydro-N-acetylmuramic acid (anhMurNAc) with the simultaneous cleavage of the 1,6-anhydro ring, generating MurNAc-6-P. Is required for the utilization of anhMurNAc either imported from the medium or derived from its own cell wall murein, and thus plays a role in cell wall recycling. This chain is Anhydro-N-acetylmuramic acid kinase, found in Acinetobacter baylyi (strain ATCC 33305 / BD413 / ADP1).